Here is a 512-residue protein sequence, read N- to C-terminus: Glutathione-binding protein GsiB (512 aa).

A signal peptide spans 1–26; sequence MARAVHRSGLVALGIATALMASCAFA.

This sequence belongs to the bacterial solute-binding protein 5 family. The complex is composed of two ATP-binding proteins (GsiA), two transmembrane proteins (GsiC and GsiD) and a solute-binding protein (GsiB).

Its subcellular location is the periplasm. In terms of biological role, part of the ABC transporter complex GsiABCD involved in glutathione import. Binds glutathione. This is Glutathione-binding protein GsiB from Shigella boydii serotype 4 (strain Sb227).